We begin with the raw amino-acid sequence, 208 residues long: Pyrrolidone-carboxylate peptidase (208 aa).

Active-site residues include E79, C142, and H166.

It belongs to the peptidase C15 family. As to quaternary structure, homotetramer made of two disulfide-linked dimers.

Its subcellular location is the cytoplasm. It catalyses the reaction Release of an N-terminal pyroglutamyl group from a polypeptide, the second amino acid generally not being Pro.. Functionally, removes 5-oxoproline from various penultimate amino acid residues except L-proline. In Pyrococcus furiosus (strain ATCC 43587 / DSM 3638 / JCM 8422 / Vc1), this protein is Pyrrolidone-carboxylate peptidase (pcp).